The sequence spans 81 residues: Protein Vpu (81 aa).

The Extracellular segment spans residues 1 to 7 (MSILQIV). A helical transmembrane segment spans residues 8–28 (AIVAIIVALILAIVVWTIVYI). Residues 29 to 81 (EYKRLLRQRKIDWLIDRIRERAEDSGNESEGDTEELSTLVEMEPDNFRNDNDM) are Cytoplasmic-facing. Residues 50 to 81 (AEDSGNESEGDTEELSTLVEMEPDNFRNDNDM) form a disordered region. A phosphoserine; by host CK2 mark is found at serine 53 and serine 57. The span at 53-63 (SGNESEGDTEE) shows a compositional bias: acidic residues.

Belongs to the HIV-1 VPU protein family. As to quaternary structure, homopentamer. Interacts with host CD4 and BRTC; these interactions induce proteasomal degradation of CD4. Interacts with host BST2; this interaction leads to the degradation of host BST2. Interacts with host FBXW11. Interacts with host AP1M1; this interaction plays a role in the mistrafficking and subsequent degradation of host BST2. Interacts with host RANBP2; this interaction allows Vpu to down-regulate host BLM sumoylation. In terms of processing, phosphorylated by host CK2. This phosphorylation is necessary for interaction with human BTRC and degradation of CD4.

The protein localises to the host membrane. Ion channel activity is inhibited by hexamethylene amiloride in vitro. Its function is as follows. Enhances virion budding by targeting host CD4 and Tetherin/BST2 to proteasome degradation. Degradation of CD4 prevents any unwanted premature interactions between viral Env and its host receptor CD4 in the endoplasmic reticulum. Degradation of antiretroviral protein Tetherin/BST2 is important for virion budding, as BST2 tethers new viral particles to the host cell membrane. Mechanistically, Vpu bridges either CD4 or BST2 to BTRC, a substrate recognition subunit of the Skp1/Cullin/F-box protein E3 ubiquitin ligase, induces their ubiquitination and subsequent proteasomal degradation. The alteration of the E3 ligase specificity by Vpu seems to promote the degradation of host IKBKB, leading to NF-kappa-B down-regulation and subsequent apoptosis. Acts as a viroporin that forms an oligomeric ion channel in membranes. Modulates the host DNA repair mechanisms to promote degradation of nuclear viral cDNA in cells that are already productively infected in order to suppress immune sensing and proviral hyper-integration (superinfection). Manipulates PML-NBs and modulates SUMOylation of host BLM protein thereby enhancing its DNA-end processing activity toward viral unintegrated linear DNA. Also inhibits RAD52-mediated homologous repair of viral cDNA, preventing the generation of dead-end circular forms of single copies of the long terminal repeat and permitting sustained nucleolytic attack. The sequence is that of Protein Vpu from Human immunodeficiency virus type 1 (HIV-1).